The following is a 429-amino-acid chain: 3-phosphoshikimate 1-carboxyvinyltransferase (429 aa).

Residues Lys-23, Ser-24, and Arg-28 each coordinate 3-phosphoshikimate. Lys-23 lines the phosphoenolpyruvate pocket. Positions 95 and 123 each coordinate phosphoenolpyruvate. 3-phosphoshikimate contacts are provided by Ser-168, Gln-170, Asp-316, and Lys-343. Gln-170 serves as a coordination point for phosphoenolpyruvate. Asp-316 functions as the Proton acceptor in the catalytic mechanism. Phosphoenolpyruvate is bound by residues Arg-347 and Arg-389.

It belongs to the EPSP synthase family. As to quaternary structure, monomer.

The protein localises to the cytoplasm. The catalysed reaction is 3-phosphoshikimate + phosphoenolpyruvate = 5-O-(1-carboxyvinyl)-3-phosphoshikimate + phosphate. It participates in metabolic intermediate biosynthesis; chorismate biosynthesis; chorismate from D-erythrose 4-phosphate and phosphoenolpyruvate: step 6/7. Its function is as follows. Catalyzes the transfer of the enolpyruvyl moiety of phosphoenolpyruvate (PEP) to the 5-hydroxyl of shikimate-3-phosphate (S3P) to produce enolpyruvyl shikimate-3-phosphate and inorganic phosphate. The sequence is that of 3-phosphoshikimate 1-carboxyvinyltransferase from Bacillus cereus (strain ATCC 10987 / NRS 248).